The chain runs to 148 residues: Calcium-regulated heat stable protein 1 (148 aa).

The segment covering 1 to 12 has biased composition (pro residues); it reads MSSEPPPPPLQP. The segment at 1-47 is disordered; that stretch reads MSSEPPPPPLQPPTHQTSVGLLDTPRTRDRSPSPLRGNVVPSPLPTR. The residue at position 2 (serine 2) is an N-acetylserine. Residues serine 31, serine 33, and serine 42 each carry the phosphoserine modification. Residue threonine 46 is modified to Phosphothreonine. 2 positions are modified to phosphoserine: serine 53 and serine 59. The CSD domain occupies 63–130; sequence VYKGVCKCFC…KLQAVEVVIT (68 aa). Serine 147 carries the phosphoserine modification.

As to quaternary structure, homodimer. Interacts with STYX. In terms of processing, can be phosphorylated by DYRK2 (in vitro). Dephosphorylated by calcineurin in a Ca(2+) dependent manner.

It localises to the cytoplasm. Its subcellular location is the P-body. The protein resides in the cytoplasmic granule. Binds mRNA and regulates the stability of target mRNA. The sequence is that of Calcium-regulated heat stable protein 1 (Carhsp1) from Mus musculus (Mouse).